Here is a 106-residue protein sequence, read N- to C-terminus: Iron-sulfur cluster assembly protein CyaY (106 aa).

This sequence belongs to the frataxin family.

Involved in iron-sulfur (Fe-S) cluster assembly. May act as a regulator of Fe-S biogenesis. The sequence is that of Iron-sulfur cluster assembly protein CyaY from Pectobacterium carotovorum subsp. carotovorum (strain PC1).